Consider the following 886-residue polypeptide: Alanine--tRNA ligase (886 aa).

The Zn(2+) site is built by H570, H574, C673, and H677.

Belongs to the class-II aminoacyl-tRNA synthetase family. Zn(2+) serves as cofactor.

It is found in the cytoplasm. It catalyses the reaction tRNA(Ala) + L-alanine + ATP = L-alanyl-tRNA(Ala) + AMP + diphosphate. Catalyzes the attachment of alanine to tRNA(Ala) in a two-step reaction: alanine is first activated by ATP to form Ala-AMP and then transferred to the acceptor end of tRNA(Ala). Also edits incorrectly charged Ser-tRNA(Ala) and Gly-tRNA(Ala) via its editing domain. This Chlorobium chlorochromatii (strain CaD3) protein is Alanine--tRNA ligase.